Reading from the N-terminus, the 206-residue chain is Small ribosomal subunit protein uS4 (206 aa).

Residues 96–156 (GRLDNVVYRM…EKAKKQSRVK (61 aa)) form the S4 RNA-binding domain.

It belongs to the universal ribosomal protein uS4 family. Part of the 30S ribosomal subunit. Contacts protein S5. The interaction surface between S4 and S5 is involved in control of translational fidelity.

One of the primary rRNA binding proteins, it binds directly to 16S rRNA where it nucleates assembly of the body of the 30S subunit. In terms of biological role, with S5 and S12 plays an important role in translational accuracy. In Serratia proteamaculans (strain 568), this protein is Small ribosomal subunit protein uS4.